The chain runs to 281 residues: Arabinooligosaccharides transport system permease protein AraQ (281 aa).

Transmembrane regions (helical) follow at residues 15–35 (LTLF…CLLL), 81–101 (LVLG…IGYG), 112–132 (IIFV…MLPL), 142–162 (IDSY…VFFF), 185–205 (FGIF…AMII), and 247–267 (MLIS…LFFQ). An ABC transmembrane type-1 domain is found at 77-266 (FFNSLVLGLF…LPVIIIFLFF (190 aa)).

Belongs to the binding-protein-dependent transport system permease family. MalFG subfamily. As to quaternary structure, the complex is composed of two ATP-binding proteins (MsmX), two transmembrane proteins (AraP and AraQ) and a solute-binding protein (AraN).

The protein localises to the cell membrane. Part of the ABC transporter complex AraNPQ involved in the uptake of arabinooligosaccharides. Transports alpha-1,5-arabinooligosaccharides, at least up to four L-arabinosyl units. Responsible for the translocation of the substrate across the membrane. This chain is Arabinooligosaccharides transport system permease protein AraQ, found in Bacillus subtilis (strain 168).